A 224-amino-acid chain; its full sequence is Metalloproteinase inhibitor 4 (224 aa).

An N-terminal signal peptide occupies residues 1 to 29 (MPWSPLAALSWALVLRLLALLWPPGRGEA). A Zn(2+)-binding site is contributed by Cys-30. Involved in metalloproteinase-binding regions lie at residues 30–33 (CSCA) and 99–100 (SS). 6 disulfides stabilise this stretch: Cys-30/Cys-102, Cys-32/Cys-131, Cys-42/Cys-156, Cys-158/Cys-205, Cys-163/Cys-168, and Cys-176/Cys-197. Residues 30–156 (CSCAPAHPQQ…SLNHHYHQNC (127 aa)) form the NTR domain.

The protein belongs to the protease inhibitor I35 (TIMP) family. In terms of tissue distribution, expressed in retina, smooth muscle, skin, pancreas, skeletal muscle, heart, brain, lung, kidney and testis. Not found in cartilage, spleen and liver.

It is found in the secreted. Its function is as follows. Complexes with metalloproteinases (such as collagenases) and irreversibly inactivates them by binding to their catalytic zinc cofactor. The protein is Metalloproteinase inhibitor 4 (Timp4) of Rattus norvegicus (Rat).